We begin with the raw amino-acid sequence, 432 residues long: Adenylosuccinate synthetase (432 aa).

Residues 13–19 (GDEGKGK) and 41–43 (GHT) contribute to the GTP site. The Proton acceptor role is filled by Asp14. Mg(2+) is bound by residues Asp14 and Gly41. IMP is bound by residues 14-17 (DEGK), 39-42 (NAGH), Thr130, Arg144, Gln225, Thr240, and Arg304. His42 serves as the catalytic Proton donor. 300–306 (AVTGRPR) is a binding site for substrate. Residues Arg306, 332-334 (KLD), and 415-417 (STG) contribute to the GTP site.

Belongs to the adenylosuccinate synthetase family. As to quaternary structure, homodimer. Requires Mg(2+) as cofactor.

The protein localises to the cytoplasm. The catalysed reaction is IMP + L-aspartate + GTP = N(6)-(1,2-dicarboxyethyl)-AMP + GDP + phosphate + 2 H(+). It functions in the pathway purine metabolism; AMP biosynthesis via de novo pathway; AMP from IMP: step 1/2. In terms of biological role, plays an important role in the de novo pathway of purine nucleotide biosynthesis. Catalyzes the first committed step in the biosynthesis of AMP from IMP. This is Adenylosuccinate synthetase from Haemophilus influenzae (strain 86-028NP).